The chain runs to 209 residues: MTTESTSNKEELSAEQLADDIVQQAEEQVEDQHDHAHEVISAEQEKINELELALATAQSTVADQKDSVIRAKAEVDNIRRRAAQDVEKARKFALEKFAGEMLTSVDNLERALQNIDKEDESNKGVIEGVELTLQGLITSLDKFGVKAVDPQDQPFNPELHQAMSMQEVPGVAPNTVIAVMQKGYELNGRLIRPAMVMVSKAAPTVDATA.

The protein belongs to the GrpE family. Homodimer.

Its subcellular location is the cytoplasm. Participates actively in the response to hyperosmotic and heat shock by preventing the aggregation of stress-denatured proteins, in association with DnaK and GrpE. It is the nucleotide exchange factor for DnaK and may function as a thermosensor. Unfolded proteins bind initially to DnaJ; upon interaction with the DnaJ-bound protein, DnaK hydrolyzes its bound ATP, resulting in the formation of a stable complex. GrpE releases ADP from DnaK; ATP binding to DnaK triggers the release of the substrate protein, thus completing the reaction cycle. Several rounds of ATP-dependent interactions between DnaJ, DnaK and GrpE are required for fully efficient folding. The protein is Protein GrpE of Colwellia psychrerythraea (strain 34H / ATCC BAA-681) (Vibrio psychroerythus).